The chain runs to 398 residues: NADH-quinone oxidoreductase subunit D (398 aa).

The protein belongs to the complex I 49 kDa subunit family. As to quaternary structure, NDH-1 is composed of 14 different subunits. Subunits NuoB, C, D, E, F, and G constitute the peripheral sector of the complex.

Its subcellular location is the cell inner membrane. The enzyme catalyses a quinone + NADH + 5 H(+)(in) = a quinol + NAD(+) + 4 H(+)(out). In terms of biological role, NDH-1 shuttles electrons from NADH, via FMN and iron-sulfur (Fe-S) centers, to quinones in the respiratory chain. The immediate electron acceptor for the enzyme in this species is believed to be ubiquinone. Couples the redox reaction to proton translocation (for every two electrons transferred, four hydrogen ions are translocated across the cytoplasmic membrane), and thus conserves the redox energy in a proton gradient. This Rhodospirillum centenum (strain ATCC 51521 / SW) protein is NADH-quinone oxidoreductase subunit D.